The following is a 1062-amino-acid chain: Roc-COR-CHAT protease (1062 aa).

LRR repeat units lie at residues 70 to 94 (LAGLQGLYLAENDFSSLQLPGHLQQ), 95 to 116 (LRLLHLADNKELKTLEFAGSMP), 115 to 141 (MPLLEEIDLSDSGIQTLQLPACPALQK), 142 to 159 (LDVSRSKLEAFSFASACP), 160 to 180 (ALWWLDLSGNGELRKLKMPAG), 181 to 203 (FKALQYLYLYKSGIQELQINGKL), 204 to 226 (PKLVVLDLEGNQLKQWPEKLLLP), and 228 to 249 (GLETLYLEGNPIENIPETIRGS). The region spanning 470–660 (DWLGVMEELQ…GLMWKDNVVF (191 aa)) is the COR domain. Residues 836–856 (ERDNDHTGLSDSSDQEDETFT) are disordered. Catalysis depends on residues histidine 931 and cysteine 980.

Functionally, a dedicated protease for substrate gasdermin bGSDM; cleaves the bGSDM precursor, releasing the pore-forming moiety, which integrates into the membrane and triggers cell death. Probably involved in defense against bacteriophages. Expression of bGSDM and this neighboring protease is highly toxic in E.coli. The polypeptide is Roc-COR-CHAT protease (Unknown prokaryotic organism).